Consider the following 98-residue polypeptide: Small ribosomal subunit protein bS6 (98 aa).

This sequence belongs to the bacterial ribosomal protein bS6 family.

In terms of biological role, binds together with bS18 to 16S ribosomal RNA. The chain is Small ribosomal subunit protein bS6 from Lactobacillus johnsonii (strain CNCM I-12250 / La1 / NCC 533).